We begin with the raw amino-acid sequence, 392 residues long: Nuclear speckle splicing regulatory protein 1 homolog (392 aa).

Disordered stretches follow at residues 1 to 73, 113 to 169, and 187 to 357; these read MASK…IFDY, RQLE…AFND, and LLND…ARLD. Composition is skewed to basic and acidic residues over residues 54–65, 113–132, 149–160, 205–238, and 313–357; these read KAAEREHQKAEA, RQLE…REKE, KQQEEVKKHREQ, QKNV…KSIY, and KSIE…ARLD. The stretch at 76-132 forms a coiled coil; sequence NYDEIQAIKNEKKEEARKADKNRESKYAENIIKAHARRQLEQFSREERQQLREREKE.

It belongs to the NSRP1 family. Expressed in the intestine, nervous system and head neurons in both larvae and adults. Expressed in the distal tip cell.

It is found in the cytoplasm. The protein resides in the nucleus. In terms of biological role, required for the cessation of distal tip cell migration at the end of larval morphogenesis. The polypeptide is Nuclear speckle splicing regulatory protein 1 homolog (ccdc-55) (Caenorhabditis elegans).